Here is a 191-residue protein sequence, read N- to C-terminus: Inosine triphosphate pyrophosphatase (191 aa).

An ITP-binding site is contributed by 15–20; it reads TGNTNK. A Mg(2+)-binding site is contributed by glutamate 43. Residues lysine 55, 71-72, lysine 88, 147-150, lysine 168, and 173-174 each bind ITP; these read DT, FGWD, and HR.

The protein belongs to the HAM1 NTPase family. As to quaternary structure, homodimer. It depends on Mg(2+) as a cofactor. Mn(2+) serves as cofactor.

The protein localises to the cytoplasm. It is found in the nucleus. The catalysed reaction is ITP + H2O = IMP + diphosphate + H(+). It carries out the reaction dITP + H2O = dIMP + diphosphate + H(+). The enzyme catalyses XTP + H2O = XMP + diphosphate + H(+). Its function is as follows. Pyrophosphatase that hydrolyzes non-canonical purine nucleotides such as inosine triphosphate (ITP), deoxyinosine triphosphate (dITP) or xanthosine 5'-triphosphate (XTP) to their respective monophosphate derivatives. The enzyme does not distinguish between the deoxy- and ribose forms. Probably excludes non-canonical purines from RNA and DNA precursor pools, thus preventing their incorporation into RNA and DNA and avoiding chromosomal lesions. This Chaetomium globosum (strain ATCC 6205 / CBS 148.51 / DSM 1962 / NBRC 6347 / NRRL 1970) (Soil fungus) protein is Inosine triphosphate pyrophosphatase.